We begin with the raw amino-acid sequence, 159 residues long: Probable RNA-binding protein EIF1AD (159 aa).

An S1-like domain is found at 18 to 93; the sequence is MMEDDYALPT…VKAEICKILT (76 aa). Residues 109 to 159 form a disordered region; it reads KFTKKPVQEEATSQNKDDSDFEDDLLPNTNRPVNRDSSDEEEDEETSSEED. Positions 146–159 are enriched in acidic residues; sequence SDEEEDEETSSEED.

It belongs to the EIF1AD family.

The chain is Probable RNA-binding protein EIF1AD from Drosophila melanogaster (Fruit fly).